The sequence spans 269 residues: Histidinol-phosphatase (269 aa).

It belongs to the PHP hydrolase family. HisK subfamily.

It catalyses the reaction L-histidinol phosphate + H2O = L-histidinol + phosphate. It participates in amino-acid biosynthesis; L-histidine biosynthesis; L-histidine from 5-phospho-alpha-D-ribose 1-diphosphate: step 8/9. This chain is Histidinol-phosphatase (hisK), found in Lactococcus lactis subsp. lactis (strain IL1403) (Streptococcus lactis).